Consider the following 883-residue polypeptide: Translation initiation factor IF-2 (883 aa).

The tract at residues 1-259 (MVDTKTPGDK…GASKQRGRLT (259 aa)) is disordered. Low complexity-rich tracts occupy residues 10 to 22 (KTLT…LTLK) and 77 to 89 (PRQQ…PQQS). Basic and acidic residues predominate over residues 113 to 184 (ARVREIEERK…GDAEPAKKPA (72 aa)). The span at 185 to 218 (ETSTTTTTAAPARPATTTTRTPTPAGRPPAVAAE) shows a compositional bias: low complexity. Over residues 235 to 244 (PARPAPPPKQ) the composition is skewed to pro residues. The tr-type G domain maps to 379–548 (PRSPVVTVMG…MIALQAEILE (170 aa)). Residues 388 to 395 (GHVDHGKT) form a G1 region. 388–395 (GHVDHGKT) provides a ligand contact to GTP. The interval 413-417 (GITQH) is G2. Positions 436 to 439 (DTPG) are G3. Residues 436–440 (DTPGH) and 490–493 (NKID) each bind GTP. The interval 490-493 (NKID) is G4. The tract at residues 526-528 (SAK) is G5.

It belongs to the TRAFAC class translation factor GTPase superfamily. Classic translation factor GTPase family. IF-2 subfamily.

The protein resides in the cytoplasm. One of the essential components for the initiation of protein synthesis. Protects formylmethionyl-tRNA from spontaneous hydrolysis and promotes its binding to the 30S ribosomal subunits. Also involved in the hydrolysis of GTP during the formation of the 70S ribosomal complex. This is Translation initiation factor IF-2 from Rhodopseudomonas palustris (strain ATCC BAA-98 / CGA009).